We begin with the raw amino-acid sequence, 289 residues long: uncharacterized protein (289 aa).

Residues 2 to 62 enclose the HTH tetR-type domain; that stretch reads NEKKERIIKT…SACEYYIGMS (61 aa). The H-T-H motif DNA-binding region spans 25–44; sequence TIQEIASECGISKGAFYLHF.

This is an uncharacterized protein from Bacillus subtilis (strain 168).